Consider the following 257-residue polypeptide: Putative hydro-lyase Bphy_2364 (257 aa).

The protein belongs to the D-glutamate cyclase family.

The sequence is that of Putative hydro-lyase Bphy_2364 from Paraburkholderia phymatum (strain DSM 17167 / CIP 108236 / LMG 21445 / STM815) (Burkholderia phymatum).